The chain runs to 205 residues: Small ribosomal subunit protein uS3c (205 aa).

In terms of domain architecture, KH type-2 spans Ile-37–Ser-106.

The protein belongs to the universal ribosomal protein uS3 family. As to quaternary structure, part of the 30S ribosomal subunit.

Its subcellular location is the plastid. The protein resides in the chloroplast. In Cyanidioschyzon merolae (strain NIES-3377 / 10D) (Unicellular red alga), this protein is Small ribosomal subunit protein uS3c (rps3).